A 292-amino-acid polypeptide reads, in one-letter code: D-alanyl-D-alanine endopeptidase (292 aa).

Residues 1–18 form the signal peptide; that stretch reads MFKKALFILSLCPSFALA. Ser-45 serves as the catalytic Acyl-ester intermediate. Catalysis depends on Lys-48, which acts as the Proton acceptor. Ser-102 is a catalytic residue. Lys-207 contributes to the substrate binding site.

This sequence belongs to the peptidase S11 family.

The protein resides in the periplasm. Functionally, cell wall formation. May play a specialized role in remodeling the cell wall. Specifically hydrolyzes the DD-diaminopimelate-alanine bonds in high-molecular-mass murein sacculi. The polypeptide is D-alanyl-D-alanine endopeptidase (pbpG) (Haemophilus influenzae (strain ATCC 51907 / DSM 11121 / KW20 / Rd)).